The sequence spans 246 residues: Probable site-specific recombinase in afa region (246 aa).

Residues 40-225 enclose the Tyr recombinase domain; the sequence is ATPAYLLAPE…FALDMAATLA (186 aa). Residues Arg75, Lys102, His177, Arg180, and His203 contribute to the active site. The active-site O-(3'-phospho-DNA)-tyrosine intermediate is Tyr212.

It belongs to the 'phage' integrase family.

The polypeptide is Probable site-specific recombinase in afa region (int) (Escherichia coli).